Consider the following 356-residue polypeptide: Phosphoribosyl pyrophosphate synthase-associated protein 1 (356 aa).

The residue at position 1 (methionine 1) is an N-acetylmethionine. Residues serine 177 and serine 215 each carry the phosphoserine modification.

Belongs to the ribose-phosphate pyrophosphokinase family. In terms of assembly, binds to PRPS1 and PRPS2.

In terms of biological role, seems to play a negative regulatory role in 5-phosphoribose 1-diphosphate synthesis. The chain is Phosphoribosyl pyrophosphate synthase-associated protein 1 (PRPSAP1) from Bos taurus (Bovine).